A 504-amino-acid chain; its full sequence is MFNWFRRQFGKDNTAPESAPPEGAEVSPELAPEVIQAETESPSEEDSQTTELAAPPPEEPSSDTANPDDYLQWAKAAYQNIQARKAETVSPPESAAAITVEAGIEETAEEIVVAPESDQATATEADLPSPETEITTGPAWLQKSDRLEALKETAVEEATVAGTLTAESMAMDDDFMWSAKVLAAQGRSAADVSAEEIDWLRKLRQGLSKTRVNLVNQLKSIVGQGPLNEAAVEEIEAILLQADVGVEATDYIITTLQDKLREEALPPEQAIEFLKEILRSILDRPLLSLPSAEFAPEAEGLNVWLLTGVNGAGKTTTIGKLAFMAKQSGYDCVIAAADTFRAAAVEQVKVWGERSGVPVIANPGQNTDPAAVVYDGISAAQSRNVNLLLVDTAGRLQNKKNLMDELAKIRRIIDKKAPNATVESLLVLDATLGQNGLRQAEVFAEAAKLSGVVLTKLDGSAKGGVALAVAQQLNLPIRFIGAGEGIEDLRPFSSYEFVEALLNG.

Disordered regions lie at residues 1 to 71 (MFNW…DDYL) and 116 to 135 (ESDQ…TEIT). GTP contacts are provided by residues 308-315 (GVNGAGKT), 391-395 (DTAGR), and 455-458 (TKLD).

The protein belongs to the GTP-binding SRP family. FtsY subfamily. In terms of assembly, part of the signal recognition particle protein translocation system, which is composed of SRP and FtsY.

It is found in the cell inner membrane. Its subcellular location is the cytoplasm. It carries out the reaction GTP + H2O = GDP + phosphate + H(+). Functionally, involved in targeting and insertion of nascent membrane proteins into the cytoplasmic membrane. Acts as a receptor for the complex formed by the signal recognition particle (SRP) and the ribosome-nascent chain (RNC). The chain is Signal recognition particle receptor FtsY from Synechocystis sp. (strain ATCC 27184 / PCC 6803 / Kazusa).